A 168-amino-acid polypeptide reads, in one-letter code: Photosystem I assembly protein Ycf3 (168 aa).

3 TPR repeats span residues 35–68, 72–105, and 120–153; these read AFTY…EIDP, SYIL…NPFL, and GEQA…TPGN.

This sequence belongs to the Ycf3 family.

Its subcellular location is the plastid membrane. Functionally, essential for the assembly of the photosystem I (PSI) complex. May act as a chaperone-like factor to guide the assembly of the PSI subunits. The polypeptide is Photosystem I assembly protein Ycf3 (Cuscuta reflexa (Southern Asian dodder)).